A 145-amino-acid polypeptide reads, in one-letter code: MDRNVYEACSNIIKEFGTHVVSADEVLAEKIDNAVPIPFKTREEIDADVEKDRNEGVFEGNIIPDIDLRVVHYYATQLCLNKYPHLINAFDETSLITLGLLIEKWVKDYLTSIQTEQGRQSKVIGKGPCEFISKHIDYRHAPGNI.

As to quaternary structure, component of the UAF (upstream activation factor) complex which consists of UAF30, RRN5, RRN9, RRN10, and histones H3 and H4.

It localises to the nucleus. Its subcellular location is the nucleolus. Component of the UAF (upstream activation factor) complex which interacts with the upstream element of the RNA polymerase I promoter and forms a stable preinitiation complex. Together with SPT15/TBP UAF seems to stimulate basal transcription to a fully activated level. This chain is RNA polymerase I-specific transcription initiation factor RRN10 (RRN10), found in Saccharomyces cerevisiae (strain ATCC 204508 / S288c) (Baker's yeast).